The chain runs to 274 residues: 2,3,4,5-tetrahydropyridine-2,6-dicarboxylate N-succinyltransferase (274 aa).

Substrate-binding residues include arginine 107 and aspartate 144.

The protein belongs to the transferase hexapeptide repeat family. In terms of assembly, homotrimer.

The protein localises to the cytoplasm. It catalyses the reaction (S)-2,3,4,5-tetrahydrodipicolinate + succinyl-CoA + H2O = (S)-2-succinylamino-6-oxoheptanedioate + CoA. Its pathway is amino-acid biosynthesis; L-lysine biosynthesis via DAP pathway; LL-2,6-diaminopimelate from (S)-tetrahydrodipicolinate (succinylase route): step 1/3. The sequence is that of 2,3,4,5-tetrahydropyridine-2,6-dicarboxylate N-succinyltransferase from Paracoccus denitrificans (strain Pd 1222).